The primary structure comprises 56 residues: Small ribosomal subunit protein uS14 (56 aa).

Ser9 carries the post-translational modification Phosphoserine. Arg12 is subject to Omega-N-methylarginine. Zn(2+) contacts are provided by Cys21, Cys24, Cys39, and Cys42. An N6-acetyllysine modification is found at Lys48.

Belongs to the universal ribosomal protein uS14 family. In terms of assembly, component of the 40S small ribosomal subunit. The cofactor is Zn(2+).

The protein resides in the cytoplasm. Its subcellular location is the cytosol. The protein localises to the rough endoplasmic reticulum. Functionally, component of the small ribosomal subunit. The ribosome is a large ribonucleoprotein complex responsible for the synthesis of proteins in the cell. This is Small ribosomal subunit protein uS14 (Rps29) from Mus musculus (Mouse).